Reading from the N-terminus, the 396-residue chain is Lipid-A-disaccharide synthase (396 aa).

The protein belongs to the LpxB family.

It catalyses the reaction a lipid X + a UDP-2-N,3-O-bis[(3R)-3-hydroxyacyl]-alpha-D-glucosamine = a lipid A disaccharide + UDP + H(+). It functions in the pathway bacterial outer membrane biogenesis; LPS lipid A biosynthesis. Functionally, condensation of UDP-2,3-diacylglucosamine and 2,3-diacylglucosamine-1-phosphate to form lipid A disaccharide, a precursor of lipid A, a phosphorylated glycolipid that anchors the lipopolysaccharide to the outer membrane of the cell. This Nitrobacter winogradskyi (strain ATCC 25391 / DSM 10237 / CIP 104748 / NCIMB 11846 / Nb-255) protein is Lipid-A-disaccharide synthase.